We begin with the raw amino-acid sequence, 39 residues long: MIEPLLCGIVLGLVPITLLGLFVAAWNQYRRGSAIPDWE.

The helical transmembrane segment at 5-25 (LLCGIVLGLVPITLLGLFVAA) threads the bilayer.

The protein belongs to the PetG family. The 4 large subunits of the cytochrome b6-f complex are cytochrome b6, subunit IV (17 kDa polypeptide, PetD), cytochrome f and the Rieske protein, while the 4 small subunits are PetG, PetL, PetM and PetN. The complex functions as a dimer.

Its subcellular location is the cellular thylakoid membrane. Its function is as follows. Component of the cytochrome b6-f complex, which mediates electron transfer between photosystem II (PSII) and photosystem I (PSI), cyclic electron flow around PSI, and state transitions. PetG is required for either the stability or assembly of the cytochrome b6-f complex. The polypeptide is Cytochrome b6-f complex subunit 5 (Prochlorococcus marinus (strain SARG / CCMP1375 / SS120)).